Consider the following 346-residue polypeptide: Tryptophan--tRNA ligase (346 aa).

Residues 21-23 and 30-31 contribute to the ATP site; these read QPT and GN. The 'HIGH' region signature appears at 22 to 31; sequence PTADSYHLGN. Asp-147 lines the L-tryptophan pocket. Residues 159 to 161, Ile-198, and 207 to 211 contribute to the ATP site; these read GED and KMSKS. Residues 207–211 carry the 'KMSKS' region motif; it reads KMSKS.

This sequence belongs to the class-I aminoacyl-tRNA synthetase family. Homodimer.

It localises to the cytoplasm. The catalysed reaction is tRNA(Trp) + L-tryptophan + ATP = L-tryptophyl-tRNA(Trp) + AMP + diphosphate + H(+). Functionally, catalyzes the attachment of tryptophan to tRNA(Trp). This is Tryptophan--tRNA ligase from Corynebacterium efficiens (strain DSM 44549 / YS-314 / AJ 12310 / JCM 11189 / NBRC 100395).